The chain runs to 285 residues: Type II secretion system protein C (285 aa).

Topologically, residues 1–27 are cytoplasmic; the sequence is MSKGIKMHNSVMRLTIPNKKIINYAPH. The chain crosses the membrane as a helical span at residues 28-46; the sequence is IVTSIILFFICQQLAQLTW. Topologically, residues 47–285 are periplasmic; it reads KIILPVNFTD…NDIYLALRDE (239 aa).

This sequence belongs to the GSP C family.

The protein localises to the cell inner membrane. Involved in a type II secretion system (T2SS, formerly general secretion pathway, GSP) for the export of proteins. Required for the translocation of pullulanase. The polypeptide is Type II secretion system protein C (pulC) (Klebsiella pneumoniae).